Reading from the N-terminus, the 142-residue chain is 3-hydroxyacyl-[acyl-carrier-protein] dehydratase FabZ (142 aa).

Residue His48 is part of the active site.

It belongs to the thioester dehydratase family. FabZ subfamily.

It is found in the cytoplasm. It carries out the reaction a (3R)-hydroxyacyl-[ACP] = a (2E)-enoyl-[ACP] + H2O. Its function is as follows. Involved in unsaturated fatty acids biosynthesis. Catalyzes the dehydration of short chain beta-hydroxyacyl-ACPs and long chain saturated and unsaturated beta-hydroxyacyl-ACPs. The sequence is that of 3-hydroxyacyl-[acyl-carrier-protein] dehydratase FabZ from Ruminiclostridium cellulolyticum (strain ATCC 35319 / DSM 5812 / JCM 6584 / H10) (Clostridium cellulolyticum).